The following is a 448-amino-acid chain: Putative vacuolar cation/proton exchanger 6 (448 aa).

Over 31 to 81 the chain is Cytoplasmic; sequence MGLVNEVELKSLLEQETDSPQTNAASLMEQGSLRERRAKAPRNSVVQSFKI. The chain crosses the membrane as a helical span at residues 82–102; that stretch reads VILSNKLNLLLPFGPLAILVH. Over 103 to 109 the chain is Extracellular; that stretch reads YLTDNKG. The chain crosses the membrane as a helical span at residues 110–130; that stretch reads WFFLLSLVGITPLAERLGYAT. Residues 131-141 lie on the Cytoplasmic side of the membrane; it reads EQLSCYTGATV. The chain crosses the membrane as a helical span at residues 142–162; that stretch reads GGLLNATFGNVIELIISIIAL. Residues 150–185 form a cation selection region; sequence GNVIELIISIIALKNGMIRVVQLTLLGSILSNILLV. Over 163 to 178 the chain is Extracellular; the sequence is KNGMIRVVQLTLLGSI. Residues 179-199 form a helical membrane-spanning segment; it reads LSNILLVLGCAFFCGGLVFPG. Residues 200–209 are Cytoplasmic-facing; it reads KDQVFDKRNA. A helical membrane pass occupies residues 210–230; the sequence is VVSSGMLLMAVMGLLFPTFLH. Residues 231 to 243 lie on the Extracellular side of the membrane; that stretch reads YTHSEVHAGSSEL. A helical membrane pass occupies residues 244–264; the sequence is ALSRFISCIMLVAYAAYLFFQ. Topologically, residues 265–295 are cytoplasmic; sequence LKSQPSFYTEKTNQNEETSNDDEDPEISKWE. A helical membrane pass occupies residues 296 to 316; sequence AIIWLSIFTAWVSLLSGYLVD. The Extracellular segment spans residues 317 to 334; it reads AIEGTSVSWKIPISFISV. A helical transmembrane segment spans residues 335–355; that stretch reads ILLPIVGNAAEHAGAIMFAMK. The interval 341–376 is cation selection; it reads GNAAEHAGAIMFAMKDKLDLSLGVAIGSSIQISMFA. Over 356–363 the chain is Cytoplasmic; that stretch reads DKLDLSLG. The chain crosses the membrane as a helical span at residues 364–384; it reads VAIGSSIQISMFAVPFCVVIG. Residues 385–393 lie on the Extracellular side of the membrane; the sequence is WMMGAQMDL. Residues 394 to 414 traverse the membrane as a helical segment; it reads NLQLFETATLLITVIVVAFFL. Residues 415–425 are Cytoplasmic-facing; that stretch reads QLEGTSNYFKR. A helical membrane pass occupies residues 426 to 446; sequence LMLILCYLIVAASFFVHEDPH. Topologically, residues 447–448 are extracellular; it reads QG.

The protein belongs to the Ca(2+):cation antiporter (CaCA) (TC 2.A.19) family. Cation/proton exchanger (CAX) subfamily.

It localises to the vacuole membrane. Its function is as follows. Vacuolar cation/proton exchanger (CAX). Translocates Ca(2+) and other metal ions into vacuoles using the proton gradient formed by H(+)-ATPase and H(+)-pyrophosphatase. This chain is Putative vacuolar cation/proton exchanger 6 (CAX6), found in Arabidopsis thaliana (Mouse-ear cress).